A 623-amino-acid polypeptide reads, in one-letter code: MKLPAVLEERRAAATDRSTLSNYEDFAVRHTNLELEVAFDERQIRAEVCYDLEQTGKGVAEVHLDTSYVQLECILVDGKRVPWELRERQEPLGSQLVITPEGGLPARFQLTCRSVTTARSTAVQWLGGAQTAGKPYVYTQLESVHARSLVPCFDTPACKSPFTVRVRSPLRAVVAGQEQPGSGKDGVYVFEQPVPIPIYLLGLAAGDIACAPLGPRSNVYCEPALLEAAAGEFGGEIERFLDAAEELLPRYIWGNYNLLVCPSSYPYGGMEVAGTSFISPSVIAYDRSNNDLIVHEMAHSWSGNLITNANWGHFWLNEGWTVYLERRITGALHGEDTRQFSSLLGMAELEVAIRASNGASFALVEDVSESVNPDNVVSLAAYEKGSALLLHLERELGGTAAFDPFIKHYFGKFGGQSLTTWQFLDILFDFFADKREKLERIDWKTWLFAPGMPPKLTYSTSLADDVYDLAEQWLEKAVQLRLPEEFAAEFSGSVLAAFTTAQQILFLNTIIQGGVSPDNTFDWTQHPVAAAALLSVYADTLGKSRNQEIIYRRYNFQLTAGMEDAYPEITTWLGSTGRMKHVRPIYRRLASIDKALAASTFQEHREKYHPICRAAIQADLGLS.

A peptide-binding positions include 140 to 142 (QLE) and 266 to 271 (PYGGME). H295 serves as a coordination point for Zn(2+). The active-site Proton acceptor is E296. Zn(2+) is bound by residues H299 and E318. Y382 acts as the Proton donor in catalysis.

This sequence belongs to the peptidase M1 family. The cofactor is Zn(2+).

The protein resides in the cytoplasm. Its subcellular location is the nucleus. The catalysed reaction is an epoxide + H2O = an ethanediol. Aminopeptidase that preferentially cleaves di- and tripeptides. Also has low epoxide hydrolase activity (in vitro). Can hydrolyze the epoxide leukotriene LTA(4) but it forms preferentially 5,6-dihydroxy-7,9,11,14-eicosatetraenoic acid rather than the cytokine leukotriene B(4) as the product compared to the homologous mammalian enzyme (in vitro). This Eremothecium gossypii (strain ATCC 10895 / CBS 109.51 / FGSC 9923 / NRRL Y-1056) (Yeast) protein is Leucine aminopeptidase 2.